Here is a 386-residue protein sequence, read N- to C-terminus: NifS-like protein (386 aa).

Pyridoxal 5'-phosphate contacts are provided by residues 58 to 59 and 184 to 186; these read SE and SIN.

This sequence belongs to the class-V pyridoxal-phosphate-dependent aminotransferase family. NifS/IscS subfamily. Pyridoxal 5'-phosphate serves as cofactor.

Its subcellular location is the virion. The sequence is that of NifS-like protein from Ornithodoros (relapsing fever ticks).